Consider the following 458-residue polypeptide: MSSGRIVQIIGAVIDVEFPRDSVPSIYNALKVQGAETTLEVQQQLGDGVVRTIAMGSTEGLKRGLDVVDTGAAISVPVGKATLGRIMDVLGNPIDEAGPIDTEERWGIHRPAPSFAEQAGGNDLLETGIKVIDLVCPFAKGGKVGLFGGAGVGKTVNMMELIRNIAIEHSGYSVFAGVGERTREGNDFYHEMKDSNVLDKVALVYGQMNEPPGNRLRVALTGLTMAEKFRDEGNDVLLFVDNIYRYTLAGTEVSALLGRMPSAVGYQPTLAEEMGVLQERITSTKEGSITSIQAVYVPADDLTDPSPATTFAHLDATVVLSRDIASLGIYPAVDPLDSTSRQLDPNVIGQEHYDTARGVQYVLQRYKELKDIIAILGMDELSETDKQLVSRARKIQRFLSQPFFVAEVFTGASGKYVSLKDTIAGFKGILNGDYDHLPEQAFYMVGGIEEAIEKAKKL.

148–155 (GGAGVGKT) contributes to the ATP binding site.

This sequence belongs to the ATPase alpha/beta chains family. In terms of assembly, F-type ATPases have 2 components, CF(1) - the catalytic core - and CF(0) - the membrane proton channel. CF(1) has five subunits: alpha(3), beta(3), gamma(1), delta(1), epsilon(1). CF(0) has three main subunits: a(1), b(2) and c(9-12). The alpha and beta chains form an alternating ring which encloses part of the gamma chain. CF(1) is attached to CF(0) by a central stalk formed by the gamma and epsilon chains, while a peripheral stalk is formed by the delta and b chains.

The protein localises to the cell inner membrane. It catalyses the reaction ATP + H2O + 4 H(+)(in) = ADP + phosphate + 5 H(+)(out). Its function is as follows. Produces ATP from ADP in the presence of a proton gradient across the membrane. The catalytic sites are hosted primarily by the beta subunits. The polypeptide is ATP synthase subunit beta (Pseudomonas fluorescens (strain SBW25)).